Here is a 475-residue protein sequence, read N- to C-terminus: Bifunctional protein HldE (475 aa).

Residues methionine 1–histidine 321 are ribokinase. ATP is bound at residue asparagine 197–glutamate 200. The active site involves aspartate 266. The interval methionine 346 to asparagine 475 is cytidylyltransferase.

It in the N-terminal section; belongs to the carbohydrate kinase PfkB family. This sequence in the C-terminal section; belongs to the cytidylyltransferase family. In terms of assembly, homodimer.

It carries out the reaction D-glycero-beta-D-manno-heptose 7-phosphate + ATP = D-glycero-beta-D-manno-heptose 1,7-bisphosphate + ADP + H(+). The enzyme catalyses D-glycero-beta-D-manno-heptose 1-phosphate + ATP + H(+) = ADP-D-glycero-beta-D-manno-heptose + diphosphate. It participates in nucleotide-sugar biosynthesis; ADP-L-glycero-beta-D-manno-heptose biosynthesis; ADP-L-glycero-beta-D-manno-heptose from D-glycero-beta-D-manno-heptose 7-phosphate: step 1/4. It functions in the pathway nucleotide-sugar biosynthesis; ADP-L-glycero-beta-D-manno-heptose biosynthesis; ADP-L-glycero-beta-D-manno-heptose from D-glycero-beta-D-manno-heptose 7-phosphate: step 3/4. Functionally, catalyzes the phosphorylation of D-glycero-D-manno-heptose 7-phosphate at the C-1 position to selectively form D-glycero-beta-D-manno-heptose-1,7-bisphosphate. Its function is as follows. Catalyzes the ADP transfer from ATP to D-glycero-beta-D-manno-heptose 1-phosphate, yielding ADP-D-glycero-beta-D-manno-heptose. The sequence is that of Bifunctional protein HldE from Coxiella burnetii (strain RSA 331 / Henzerling II).